The primary structure comprises 319 residues: Acetyl-coenzyme A carboxylase carboxyl transferase subunit alpha (319 aa).

Residues 35-296 (NIDEEVHRLR…KAQLLEDLAD (262 aa)) form the CoA carboxyltransferase C-terminal domain.

It belongs to the AccA family. As to quaternary structure, acetyl-CoA carboxylase is a heterohexamer composed of biotin carboxyl carrier protein (AccB), biotin carboxylase (AccC) and two subunits each of ACCase subunit alpha (AccA) and ACCase subunit beta (AccD).

The protein localises to the cytoplasm. It carries out the reaction N(6)-carboxybiotinyl-L-lysyl-[protein] + acetyl-CoA = N(6)-biotinyl-L-lysyl-[protein] + malonyl-CoA. It functions in the pathway lipid metabolism; malonyl-CoA biosynthesis; malonyl-CoA from acetyl-CoA: step 1/1. In terms of biological role, component of the acetyl coenzyme A carboxylase (ACC) complex. First, biotin carboxylase catalyzes the carboxylation of biotin on its carrier protein (BCCP) and then the CO(2) group is transferred by the carboxyltransferase to acetyl-CoA to form malonyl-CoA. The polypeptide is Acetyl-coenzyme A carboxylase carboxyl transferase subunit alpha (Salmonella dublin (strain CT_02021853)).